A 167-amino-acid polypeptide reads, in one-letter code: L-alanine exporter AlaE (167 aa).

4 helical membrane-spanning segments follow: residues 25–45 (GTEFLADTVALILFFTTTGII), 50–70 (IAGMSWDQVLHARLIGAALMI), 105–125 (FQVPIYAAIIAFSGATGGGLV), and 129–149 (LGAALMMLFLGRPYGAFLNWV).

The protein belongs to the AlaE exporter family.

It is found in the cell inner membrane. Exports L-alanine. In Pantoea sp. (strain At-9b), this protein is L-alanine exporter AlaE.